The primary structure comprises 1027 residues: Scavenger receptor cysteine-rich domain-containing protein SCART1 (1027 aa).

The first 19 residues, 1–19, serve as a signal peptide directing secretion; the sequence is MRAALWTLGLGPLLLNLWA. The Extracellular portion of the chain corresponds to 20 to 906; it reads VPIGGPGALR…APFRTFWVVS (887 aa). Positions 28–128 constitute an SRCR 1 domain; that stretch reads LRLAYRHSTC…HAWVVVALCS (101 aa). 3 disulfides stabilise this stretch: Cys-53/Cys-117, Cys-66/Cys-127, and Cys-97/Cys-107. Residue Asn-94 is glycosylated (N-linked (GlcNAc...) asparagine). N-linked (GlcNAc...) asparagine glycosylation occurs at Asn-129. SRCR domains lie at 135 to 227, 232 to 326, 328 to 428, 434 to 534, 555 to 656, 661 to 761, and 786 to 886; these read LRLV…VVCS, ARLV…LRCS, FRMV…AVCS, LRLR…VVCS, LSLH…VFCS, LRLR…AGLS, and LRVR…VRCW. Cystine bridges form between Cys-160/Cys-216, Cys-171/Cys-226, Cys-196/Cys-206, Cys-253/Cys-315, Cys-266/Cys-325, and Cys-297/Cys-307. Asn-332 is a glycosylation site (N-linked (GlcNAc...) asparagine). 7 cysteine pairs are disulfide-bonded: Cys-353-Cys-417, Cys-366-Cys-427, Cys-397-Cys-407, Cys-472-Cys-533, Cys-503-Cys-513, Cys-594-Cys-655, and Cys-625-Cys-635. 2 disulfides stabilise this stretch: Cys-824-Cys-885 and Cys-855-Cys-865. A helical transmembrane segment spans residues 907-927; the sequence is VVLGSLLGLLLLGLMAFLILP. The Cytoplasmic segment spans residues 928–1027; sequence RVTQAMQRGL…AAFPLEEMTL (100 aa).

Mainly expressed by CD4(+) and CD8(+) T lymphocytes. Also highly expressed in small intestine and colon. Expressed (at protein level) in small intestine, stomach, gall bladder, and placental villi.

It localises to the membrane. Its function is as follows. May play a role in the immune system, perhaps as a co-receptor on alphabeta and gammadelta T-cells. The polypeptide is Scavenger receptor cysteine-rich domain-containing protein SCART1 (Homo sapiens (Human)).